Reading from the N-terminus, the 538-residue chain is Mitochondrial distribution and morphology protein 34 (538 aa).

Positions 1–224 constitute an SMP-LTD domain; it reads MSFRFDRSVF…LPTALFNMSQ (224 aa). Disordered stretches follow at residues 26-55 and 231-251; these read ALNPKSRRHVERADEAGNEDDSSGHQRKSG and DGSRSSAKHKKDTCDENNQPS.

This sequence belongs to the MDM34 family. Component of the ER-mitochondria encounter structure (ERMES) or MDM complex, composed of MMM1, MDM10, MDM12 and MDM34.

The protein resides in the mitochondrion outer membrane. Functionally, component of the ERMES/MDM complex, which serves as a molecular tether to connect the endoplasmic reticulum (ER) and mitochondria. Components of this complex are involved in the control of mitochondrial shape and protein biogenesis, and function in nonvesicular lipid trafficking between the ER and mitochondria. MDM34 is required for the interaction of the ER-resident membrane protein MMM1 and the outer mitochondrial membrane-resident beta-barrel protein MDM10. This is Mitochondrial distribution and morphology protein 34 from Candida glabrata (strain ATCC 2001 / BCRC 20586 / JCM 3761 / NBRC 0622 / NRRL Y-65 / CBS 138) (Yeast).